The following is a 348-amino-acid chain: Nitrogenase vanadium-iron protein beta chain (348 aa).

[8Fe-7S] cluster contacts are provided by C31, C56, C115, and S153.

This sequence belongs to the NifD/NifK/NifE/NifN family. As to quaternary structure, hexamer of two alpha, two beta, and two delta chains. [8Fe-7S] cluster serves as cofactor.

The enzyme catalyses N2 + 8 reduced [2Fe-2S]-[ferredoxin] + 16 ATP + 16 H2O = H2 + 8 oxidized [2Fe-2S]-[ferredoxin] + 2 NH4(+) + 16 ADP + 16 phosphate + 6 H(+). Its function is as follows. This vanadium-iron protein is part of the nitrogenase complex that catalyzes the key enzymatic reactions in nitrogen fixation. The sequence is that of Nitrogenase vanadium-iron protein beta chain (vnfK) from Azotobacter salinestris.